The chain runs to 288 residues: MAAGKEIRGKIKSVENTKKITKAMEMVAASKMRKAQERMRAARPYSDKIRNVAANLSQANPEYTHAFMESNDAKATGFIVVTTDKGLCGGLNTNVLRAVTSKLKDLQAAGHDALAVAIGNKGLGFLNRVGAKVVSHATQLGDKPHLEKLIGPVKVLLDAYSEGKINAVYLCYTKFINTMRQEPVVEQLLPLTAAHLQADKDQHGWDYIYEPDAQTVIDDLLLRYVEALIYQAVAENMASEQSARMVAMKAATDNAGSVIGELKLIYNKTRQAAITKELSEIVAGAAAV.

The protein belongs to the ATPase gamma chain family. In terms of assembly, F-type ATPases have 2 components, CF(1) - the catalytic core - and CF(0) - the membrane proton channel. CF(1) has five subunits: alpha(3), beta(3), gamma(1), delta(1), epsilon(1). CF(0) has three main subunits: a, b and c.

It is found in the cell inner membrane. Functionally, produces ATP from ADP in the presence of a proton gradient across the membrane. The gamma chain is believed to be important in regulating ATPase activity and the flow of protons through the CF(0) complex. This Polaromonas sp. (strain JS666 / ATCC BAA-500) protein is ATP synthase gamma chain.